The following is an 885-amino-acid chain: Envelope glycoprotein gp160 (885 aa).

The first 23 residues, 1–23, serve as a signal peptide directing secretion; it reads MGCLGNQLLIALLLVSVLEICCV. Topologically, residues 24–700 are extracellular; sequence QYVTVFYGVP…TSWIRYIQYG (677 aa). An N-linked (GlcNAc...) asparagine; by host glycan is attached at N37. Residues C44 and C57 are joined by a disulfide bond. Residues N70, N114, N148, N156, N173, N186, N201, N213, N245, N255, N279, N285, N296, N307, N317, N372, and N378 are each glycosylated (N-linked (GlcNAc...) asparagine; by host). 5 disulfides stabilise this stretch: C101–C221, C108–C212, C113–C170, C234–C264, and C244–C256. Positions 113–169 are V1; sequence CNKTETDRWGLTGNAGTTTTAITTTATPSVAENVINESNPCIKNNSCAGLEQEPMIG. Positions 170-212 are V2; the sequence is CKFNMTGLNRDKKKEYNETWYSRDLICEQSANESESKCYMHHC. The segment at 312 to 344 is V3; the sequence is CRRPENKTVLPVTIMSGLVFHSQPINERPKQAW. A disulfide bridge links C312 with C345. 2 cysteine pairs are disulfide-bonded: C396–C465 and C403–C438. The V4 stretch occupies residues 403–438; the sequence is CKMNWFLNWVEDRDQKGGRWKQQNRKEQQKKNYVPC. N466, N482, and N485 each carry an N-linked (GlcNAc...) asparagine; by host glycan. The tract at residues 481–488 is V5; the sequence is SNETNITM. The interval 532–552 is fusion peptide; sequence GVFVLGFLGFLATAGSAMGAA. The tract at residues 595–611 is immunosuppression; the sequence is LQTRVTAIEKYLKDQAQ. Residues N631, N640, and N656 are each glycosylated (N-linked (GlcNAc...) asparagine; by host). The stretch at 640-672 forms a coiled coil; that stretch reads NMTWQEWERQVDFLEANITQLLEEAQIQQEKNM. Residues 677–698 are MPER; binding to GalCer; it reads KLNSWDIFGNWFDLTSWIRYIQ. A helical transmembrane segment spans residues 701–721; it reads VLIVLGVIGLRIVIYVVQMLA. At 722-885 the chain is on the cytoplasmic side; sequence RLRQGYRPVF…IRQGLELTLL (164 aa). The YXXV motif; contains endocytosis signal motif lies at 727–730; sequence YRPV. The tract at residues 743 to 764 is disordered; it reads IHKGQEPPTKEGEEGDGGDRGG. Residues 745–764 are compositionally biased toward basic and acidic residues; the sequence is KGQEPPTKEGEEGDGGDRGG. A lipid anchor (S-palmitoyl cysteine; by host) is attached at C793. The short motif at 884 to 885 is the Di-leucine internalization motif element; the sequence is LL.

In terms of assembly, the mature envelope protein (Env) consists of a homotrimer of non-covalently associated gp120-gp41 heterodimers. The resulting complex protrudes from the virus surface as a spike. Interacts with host CD4 and CCR5. Gp120 also interacts with the C-type lectins CD209/DC-SIGN and CLEC4M/DC-SIGNR (collectively referred to as DC-SIGN(R)). The mature envelope protein (Env) consists of a homotrimer of non-covalently associated gp120-gp41 heterodimers. The resulting complex protrudes from the virus surface as a spike. Post-translationally, specific enzymatic cleavages in vivo yield mature proteins. Envelope glycoproteins are synthesized as an inactive precursor that is heavily N-glycosylated and processed likely by host cell furin in the Golgi to yield the mature SU and TM proteins. The cleavage site between SU and TM requires the minimal sequence [KR]-X-[KR]-R. Palmitoylation of the transmembrane protein and of Env polyprotein (prior to its proteolytic cleavage) is essential for their association with host cell membrane lipid rafts. Palmitoylation is therefore required for envelope trafficking to classical lipid rafts, but not for viral replication.

The protein localises to the virion membrane. It localises to the host cell membrane. It is found in the host endosome membrane. Functionally, the surface protein gp120 (SU) attaches the virus to the host lymphoid cell by binding to the primary receptor CD4. This interaction induces a structural rearrangement creating a high affinity binding site for a chemokine coreceptor like CCR5. This peculiar 2 stage receptor-interaction strategy allows gp120 to maintain the highly conserved coreceptor-binding site in a cryptic conformation, protected from neutralizing antibodies. These changes are transmitted to the transmembrane protein gp41 and are thought to activate its fusogenic potential by unmasking its fusion peptide. In terms of biological role, surface protein gp120 (SU) may target the virus to gut-associated lymphoid tissue (GALT) by binding host ITGA4/ITGB7 (alpha-4/beta-7 integrins), a complex that mediates T-cell migration to the GALT. Interaction between gp120 and ITGA4/ITGB7 would allow the virus to enter GALT early in the infection, infecting and killing most of GALT's resting CD4+ T-cells. This T-cell depletion is believed to be the major insult to the host immune system leading to AIDS. The surface protein gp120 is a ligand for CD209/DC-SIGN and CLEC4M/DC-SIGNR, which are respectively found on dendritic cells (DCs), and on endothelial cells of liver sinusoids and lymph node sinuses. These interactions allow capture of viral particles at mucosal surfaces by these cells and subsequent transmission to permissive cells. DCs are professional antigen presenting cells, critical for host immunity by inducing specific immune responses against a broad variety of pathogens. They act as sentinels in various tissues where they take up antigen, process it, and present it to T-cells following migration to lymphoid organs. SIV subverts the migration properties of dendritic cells to gain access to CD4+ T-cells in lymph nodes. Virus transmission to permissive T-cells occurs either in trans (without DCs infection, through viral capture and transmission), or in cis (following DCs productive infection, through the usual CD4-gp120 interaction), thereby inducing a robust infection. In trans infection, bound virions remain infectious over days and it is proposed that they are not degraded, but protected in non-lysosomal acidic organelles within the DCs close to the cell membrane thus contributing to the viral infectious potential during DCs' migration from the periphery to the lymphoid tissues. On arrival at lymphoid tissues, intact virions recycle back to DCs' cell surface allowing virus transmission to CD4+ T-cells. Virion capture also seems to lead to MHC-II-restricted viral antigen presentation, and probably to the activation of SIV-specific CD4+ cells. Its function is as follows. The transmembrane protein gp41 (TM) acts as a class I viral fusion protein. Under the current model, the protein has at least 3 conformational states: pre-fusion native state, pre-hairpin intermediate state, and post-fusion hairpin state. During fusion of viral and target intracellular membranes, the coiled coil regions (heptad repeats) assume a trimer-of-hairpins structure, positioning the fusion peptide in close proximity to the C-terminal region of the ectodomain. The formation of this structure appears to drive apposition and subsequent fusion of viral and target cell membranes. Complete fusion occurs in host cell endosomes. The virus undergoes clathrin-dependent internalization long before endosomal fusion, thus minimizing the surface exposure of conserved viral epitopes during fusion and reducing the efficacy of inhibitors targeting these epitopes. Membranes fusion leads to delivery of the nucleocapsid into the cytoplasm. Functionally, the envelope glycoprotein gp160 precursor down-modulates cell surface CD4 antigen by interacting with it in the endoplasmic reticulum and blocking its transport to the cell surface. In terms of biological role, the gp120-gp41 heterodimer allows rapid transcytosis of the virus through CD4 negative cells such as simple epithelial monolayers of the intestinal, rectal and endocervical epithelial barriers. Both gp120 and gp41 specifically recognize glycosphingolipids galactosyl-ceramide (GalCer) or 3' sulfo-galactosyl-ceramide (GalS) present in the lipid rafts structures of epithelial cells. Binding to these alternative receptors allows the rapid transcytosis of the virus through the epithelial cells. This transcytotic vesicle-mediated transport of virions from the apical side to the basolateral side of the epithelial cells does not involve infection of the cells themselves. The protein is Envelope glycoprotein gp160 (env) of Cercopithecidae (Old World monkeys).